Here is a 544-residue protein sequence, read N- to C-terminus: CTP synthase (544 aa).

Residues 1-266 (MKKRFIFITG…DQIICHHFKL (266 aa)) form an amidoligase domain region. Residue serine 14 coordinates CTP. Serine 14 provides a ligand contact to UTP. ATP-binding positions include 15-20 (SLGKGI) and aspartate 72. Residues aspartate 72 and glutamate 140 each coordinate Mg(2+). Residues 147–149 (DIE), 187–192 (KTKPTQ), and lysine 223 contribute to the CTP site. UTP-binding positions include 187-192 (KTKPTQ) and lysine 223. Positions 291 to 541 (TIGIIGKYIK…IKAAIQYKKI (251 aa)) constitute a Glutamine amidotransferase type-1 domain. L-glutamine is bound at residue glycine 352. Cysteine 379 functions as the Nucleophile; for glutamine hydrolysis in the catalytic mechanism. L-glutamine contacts are provided by residues 380-383 (LGMQ), glutamate 403, and arginine 469. Residues histidine 514 and glutamate 516 contribute to the active site.

This sequence belongs to the CTP synthase family. Homotetramer.

It carries out the reaction UTP + L-glutamine + ATP + H2O = CTP + L-glutamate + ADP + phosphate + 2 H(+). The enzyme catalyses L-glutamine + H2O = L-glutamate + NH4(+). The catalysed reaction is UTP + NH4(+) + ATP = CTP + ADP + phosphate + 2 H(+). The protein operates within pyrimidine metabolism; CTP biosynthesis via de novo pathway; CTP from UDP: step 2/2. Allosterically activated by GTP, when glutamine is the substrate; GTP has no effect on the reaction when ammonia is the substrate. The allosteric effector GTP functions by stabilizing the protein conformation that binds the tetrahedral intermediate(s) formed during glutamine hydrolysis. Inhibited by the product CTP, via allosteric rather than competitive inhibition. In terms of biological role, catalyzes the ATP-dependent amination of UTP to CTP with either L-glutamine or ammonia as the source of nitrogen. Regulates intracellular CTP levels through interactions with the four ribonucleotide triphosphates. In Buchnera aphidicola subsp. Baizongia pistaciae (strain Bp), this protein is CTP synthase.